The sequence spans 420 residues: Fasciclin-like arabinogalactan protein 4 (420 aa).

Residues 1 to 28 (MANVISISHFTLLALPYLLLLLSSTAAA) form the signal peptide. FAS1 domains lie at 29–177 (INVT…DSLI) and 205–351 (GINL…SKVL). N-linked (GlcNAc...) asparagine glycosylation is found at Asn-30, Asn-40, Asn-135, Asn-154, Asn-167, Asn-207, Asn-312, and Asn-317. The interval 360-388 (SGQPVATAPPQEISLSPESSSEQPSRLVS) is disordered. Over residues 368 to 384 (PPQEISLSPESSSEQPS) the composition is skewed to low complexity. Ser-396 carries the GPI-anchor amidated serine lipid modification. Positions 397-420 (GAVKRPLGFLVLWCWCIAFCYVLV) are cleaved as a propeptide — removed in mature form.

Belongs to the fasciclin-like AGP family. In terms of tissue distribution, expressed in all plant organs and tissues, including guard cells in the leaf.

It localises to the cell membrane. Its function is as follows. May be a cell surface adhesion protein that is required for normal cell expansion. The polypeptide is Fasciclin-like arabinogalactan protein 4 (FLA4) (Arabidopsis thaliana (Mouse-ear cress)).